We begin with the raw amino-acid sequence, 233 residues long: Superoxide dismutase [Mn] 3.3, mitochondrial (233 aa).

A mitochondrion-targeting transit peptide spans 1–29 (MALRTLASKNALSFALGGAARPSAESARG). Residues His-57, His-105, Asp-194, and His-198 each contribute to the Mn(2+) site.

This sequence belongs to the iron/manganese superoxide dismutase family. Homotetramer. Mn(2+) serves as cofactor. As to expression, predominantly expressed in the embryo late in embryogenesis.

The protein resides in the mitochondrion matrix. It catalyses the reaction 2 superoxide + 2 H(+) = H2O2 + O2. Functionally, destroys superoxide anion radicals which are normally produced within the cells and which are toxic to biological systems. The protein is Superoxide dismutase [Mn] 3.3, mitochondrial (SODA.2) of Zea mays (Maize).